Here is a 1161-residue protein sequence, read N- to C-terminus: Lethal(2) giant larvae protein (1161 aa).

A phospho-regulated basic and hydrophobic (PRBH) motif region spans residues D15–Q86. WD repeat units follow at residues S39–Q72, E82–L128, V131–I167, S189–Y223, S231–P263, S278–V320, V328–L358, and T380–K464. Residues S473 and S484 each carry the phosphoserine modification. 2 WD repeats span residues K513–L594 and T603–S664. Position 679 is a phosphoserine (S679). 4 WD repeats span residues V708 to Q778, G787 to I832, L837 to A927, and C941 to T964. Residues S808, S869, S876, S887, S889, and S893 each carry the phosphoserine modification. S1013 carries the post-translational modification Phosphoserine. The interval E1141–F1161 is disordered.

This sequence belongs to the WD repeat L(2)GL family. May form multimeric complexes. Interacts with mahj. Interacts with aPKC; leading to phosphorylation. Interacts with ball. Post-translationally, phosphorylated by aPKC which lowers lipid affinity and promotes dissociation from the cell cortex. In developing oocytes, aPKC-mediated phosphorylation restricts activity to the oocyte posterior and is required for oocyte polarity formation. In terms of tissue distribution, expressed in the epithelial cells of the digestive tract and in gonads.

It is found in the cytoplasm. The protein localises to the cell cortex. Its function is as follows. Essential for the development of polarized epithelia, for cell polarity associated with asymmetric cell division of neuroblasts during development, and for oocyte polarity formation. Promotes the formation of actin-rich projections at the oocyte cortex and the posterior enrichment of par-1 which is required for oocyte polarization. Regulates the localization of axis-specifying morphogens such as stau and grk. Functionally, has an essential role in control of cell proliferation and differentiation during development and could act as a tumor suppressor. Has an accessory function in control of cell proliferation and differentiation during development. The sequence is that of Lethal(2) giant larvae protein (l(2)gl) from Drosophila melanogaster (Fruit fly).